The chain runs to 237 residues: 2-C-methyl-D-erythritol 4-phosphate cytidylyltransferase (237 aa).

The protein belongs to the IspD/TarI cytidylyltransferase family. IspD subfamily.

The enzyme catalyses 2-C-methyl-D-erythritol 4-phosphate + CTP + H(+) = 4-CDP-2-C-methyl-D-erythritol + diphosphate. The protein operates within isoprenoid biosynthesis; isopentenyl diphosphate biosynthesis via DXP pathway; isopentenyl diphosphate from 1-deoxy-D-xylulose 5-phosphate: step 2/6. In terms of biological role, catalyzes the formation of 4-diphosphocytidyl-2-C-methyl-D-erythritol from CTP and 2-C-methyl-D-erythritol 4-phosphate (MEP). In Vibrio vulnificus (strain YJ016), this protein is 2-C-methyl-D-erythritol 4-phosphate cytidylyltransferase.